Reading from the N-terminus, the 200-residue chain is Small ribosomal subunit protein mS38 (200 aa).

Belongs to the mitochondrion-specific ribosomal protein mS38 family. In terms of assembly, component of the mitochondrial ribosome small subunit (28S) which comprises a 12S rRNA and about 30 distinct proteins. Interacts with Aurora-A. In terms of tissue distribution, ubiquitously expressed and especially highly expressed in heart, skeletal muscle and testis.

Its subcellular location is the mitochondrion matrix. It is found in the nucleus. May act as a negative regulator of Aurora-A kinase, by down-regulation through proteasome-dependent degradation. The polypeptide is Small ribosomal subunit protein mS38 (Aurkaip1) (Mus musculus (Mouse)).